Here is a 501-residue protein sequence, read N- to C-terminus: L-arabinose isomerase (501 aa).

Residues Glu306, Glu333, His350, and His450 each contribute to the Mn(2+) site.

Belongs to the arabinose isomerase family. As to quaternary structure, homohexamer. It depends on Mn(2+) as a cofactor.

It carries out the reaction beta-L-arabinopyranose = L-ribulose. Its pathway is carbohydrate degradation; L-arabinose degradation via L-ribulose; D-xylulose 5-phosphate from L-arabinose (bacterial route): step 1/3. Its function is as follows. Catalyzes the conversion of L-arabinose to L-ribulose. The chain is L-arabinose isomerase from Erwinia tasmaniensis (strain DSM 17950 / CFBP 7177 / CIP 109463 / NCPPB 4357 / Et1/99).